The primary structure comprises 99 residues: MAHLSLNQYKCTHIIMHGTCLSGLYPVPFTHKAHDYPHFNIYISFGGPKYCITALNTYVIPLFHHLLSTQFIYTYVNITKKSPLKSPKHKNILSFNDNT.

Belongs to the UPF0320 family.

This chain is UPF0320 protein YER188C-A, found in Saccharomyces cerevisiae (strain ATCC 204508 / S288c) (Baker's yeast).